A 268-amino-acid polypeptide reads, in one-letter code: 4-hydroxy-tetrahydrodipicolinate reductase (268 aa).

9 to 14 provides a ligand contact to NAD(+); the sequence is GCSGRM. R36 lines the NADP(+) pocket. NAD(+) is bound by residues 98–100 and 122–125; these read GTT and APNT. The Proton donor/acceptor role is filled by H155. Position 156 (H156) interacts with (S)-2,3,4,5-tetrahydrodipicolinate. K159 (proton donor) is an active-site residue. 165 to 166 provides a ligand contact to (S)-2,3,4,5-tetrahydrodipicolinate; the sequence is GT.

Belongs to the DapB family.

It is found in the cytoplasm. The catalysed reaction is (S)-2,3,4,5-tetrahydrodipicolinate + NAD(+) + H2O = (2S,4S)-4-hydroxy-2,3,4,5-tetrahydrodipicolinate + NADH + H(+). It carries out the reaction (S)-2,3,4,5-tetrahydrodipicolinate + NADP(+) + H2O = (2S,4S)-4-hydroxy-2,3,4,5-tetrahydrodipicolinate + NADPH + H(+). It participates in amino-acid biosynthesis; L-lysine biosynthesis via DAP pathway; (S)-tetrahydrodipicolinate from L-aspartate: step 4/4. In terms of biological role, catalyzes the conversion of 4-hydroxy-tetrahydrodipicolinate (HTPA) to tetrahydrodipicolinate. The polypeptide is 4-hydroxy-tetrahydrodipicolinate reductase (Colwellia psychrerythraea (strain 34H / ATCC BAA-681) (Vibrio psychroerythus)).